A 163-amino-acid chain; its full sequence is Allophycocyanin alpha-B chain (163 aa).

N71 carries the N4-methylasparagine modification. (2R,3E)-phycocyanobilin is bound at residue C81.

Belongs to the phycobiliprotein family. In terms of assembly, heterodimer of an alpha and a beta chain. Post-translationally, contains one covalently linked bilin chromophore.

The protein localises to the cellular thylakoid membrane. Its function is as follows. Light-harvesting photosynthetic bile pigment-protein from the phycobiliprotein complex. Allophycocyanin has a maximum absorption at approximately 650 nanometers. The protein is Allophycocyanin alpha-B chain of Synechococcus sp. (strain ATCC 27144 / PCC 6301 / SAUG 1402/1) (Anacystis nidulans).